The chain runs to 567 residues: MSARPAQPNIYAPIRTSLSGYPSPTHSGSSTPASLEFSDGRLPENNVERDMSKVVERVALLGEADEGAVIVEGEDKVTKFVWMLVSAAAISGLLFGYDTAAISGMLVIIKDDLGTILSSWQKEVITSATTLGALLGGLAAGCVSDFTGRRLVIVFANVAFIGGSICQAACHTVAAMIAGRFIVGLGVGLASCIVPLYIGELAPTMIRGRLVTINCVAVTLGQVVAYAIGASFQNVHNGWRWIVGLGAMPSFVQLAAIGFLPESPRILLLRSDVAGARAITAKIYPLATIEQVDRKIEIMKAAVDQSIEYNANSTWFERLKSLVMVGTNRRALIIGCGLQAAQQLCGFNTLMYYSATIFAMLGFNNATAVGLIVATVNVLFTLVALKIVDPVGRRRTMLFTLPIMILALVFAAIFFYYLTLSTNGILIEDHDYPRSLSILVLLSMLLYVAGYATGLGNIPWQQGELFRLEVRGIGTSICTAVNWSCNMLIAGTFLSLMDAATPSGAFGIYAGFCVIGWVFCWMLYPETSGLSLEEVYFVFEEGFGIKKSQQLRKQKLVEAAKLKAIFE.

Residues 1–88 lie on the Cytoplasmic side of the membrane; that stretch reads MSARPAQPNI…KFVWMLVSAA (88 aa). Residues 14–42 are disordered; sequence IRTSLSGYPSPTHSGSSTPASLEFSDGRL. Polar residues predominate over residues 16–33; that stretch reads TSLSGYPSPTHSGSSTPA. A helical transmembrane segment spans residues 89–109; sequence AISGLLFGYDTAAISGMLVII. Over 110–123 the chain is Extracellular; it reads KDDLGTILSSWQKE. The helical transmembrane segment at 124-144 threads the bilayer; sequence VITSATTLGALLGGLAAGCVS. Topologically, residues 145–150 are cytoplasmic; it reads DFTGRR. A helical membrane pass occupies residues 151–171; the sequence is LVIVFANVAFIGGSICQAACH. The Extracellular segment spans residues 172–180; that stretch reads TVAAMIAGR. Residues 181-201 traverse the membrane as a helical segment; that stretch reads FIVGLGVGLASCIVPLYIGEL. Residues 202-209 are Cytoplasmic-facing; the sequence is APTMIRGR. The helical transmembrane segment at 210 to 230 threads the bilayer; it reads LVTINCVAVTLGQVVAYAIGA. Residues 231 to 240 lie on the Extracellular side of the membrane; that stretch reads SFQNVHNGWR. The chain crosses the membrane as a helical span at residues 241–261; it reads WIVGLGAMPSFVQLAAIGFLP. Residues 262 to 343 lie on the Cytoplasmic side of the membrane; that stretch reads ESPRILLLRS…IGCGLQAAQQ (82 aa). The helical transmembrane segment at 344 to 364 threads the bilayer; sequence LCGFNTLMYYSATIFAMLGFN. N-linked (GlcNAc...) asparagine glycosylation occurs at N365. The Extracellular portion of the chain corresponds to 365 to 367; the sequence is NAT. A helical membrane pass occupies residues 368–388; the sequence is AVGLIVATVNVLFTLVALKIV. Residues 389 to 397 are Cytoplasmic-facing; it reads DPVGRRRTM. Residues 398–418 form a helical membrane-spanning segment; it reads LFTLPIMILALVFAAIFFYYL. Topologically, residues 419–435 are extracellular; sequence TLSTNGILIEDHDYPRS. A helical membrane pass occupies residues 436–456; the sequence is LSILVLLSMLLYVAGYATGLG. The Cytoplasmic segment spans residues 457–476; that stretch reads NIPWQQGELFRLEVRGIGTS. Residues 477–497 form a helical membrane-spanning segment; sequence ICTAVNWSCNMLIAGTFLSLM. Residues 498–503 are Extracellular-facing; that stretch reads DAATPS. The helical transmembrane segment at 504–524 threads the bilayer; it reads GAFGIYAGFCVIGWVFCWMLY. The Cytoplasmic portion of the chain corresponds to 525–567; sequence PETSGLSLEEVYFVFEEGFGIKKSQQLRKQKLVEAAKLKAIFE.

It belongs to the major facilitator superfamily. Sugar transporter (TC 2.A.1.1) family.

The protein localises to the cell membrane. The catalysed reaction is myo-inositol(out) + H(+)(out) = myo-inositol(in) + H(+)(in). Functionally, may function as a transporter or as a sensor for myo-inositol. This is Myo-inositol transporter 1 from Cryptococcus neoformans var. grubii serotype A (strain H99 / ATCC 208821 / CBS 10515 / FGSC 9487) (Filobasidiella neoformans var. grubii).